We begin with the raw amino-acid sequence, 86 residues long: Neurotoxin 3FTx-LT (86 aa).

The first 21 residues, 1–21, serve as a signal peptide directing secretion; it reads MKTLLLTLVVVTIVCLDLGYT. 5 disulfide bridges follow: Cys24/Cys45, Cys27/Cys32, Cys38/Cys63, Cys67/Cys78, and Cys79/Cys84.

Expressed by the venom gland.

The protein resides in the secreted. In terms of biological role, binds with low affinity to muscular (alpha-1-beta-1-delta-epsilon/CHRNA1-CHRNB1-CHRND-CHRNE) and very low affinity to neuronal (alpha-7/CHRNA7) nicotinic acetylcholine receptor (nAChR). This Bungarus fasciatus (Banded krait) protein is Neurotoxin 3FTx-LT.